The primary structure comprises 512 residues: Histidine ammonia-lyase (512 aa).

Residues 143 to 145 (CSG) constitute a cross-link (5-imidazolinone (Cys-Gly)). Ser144 is modified (2,3-didehydroalanine (Ser)).

It belongs to the PAL/histidase family. Contains an active site 4-methylidene-imidazol-5-one (MIO), which is formed autocatalytically by cyclization and dehydration of residues Cys-Ser-Gly.

It is found in the cytoplasm. The enzyme catalyses L-histidine = trans-urocanate + NH4(+). The protein operates within amino-acid degradation; L-histidine degradation into L-glutamate; N-formimidoyl-L-glutamate from L-histidine: step 1/3. The protein is Histidine ammonia-lyase of Streptomyces coelicolor (strain ATCC BAA-471 / A3(2) / M145).